We begin with the raw amino-acid sequence, 555 residues long: Glutamine--tRNA ligase (555 aa).

A 'HIGH' region motif is present at residues 34 to 44; it reads PEPNGYLHIGH. ATP is bound by residues 35-37 and 41-47; these read EPN and HIGHAKS. Asp-67 and Tyr-212 together coordinate L-glutamine. Residues Thr-231, 261–262, and 269–271 contribute to the ATP site; these read RL and MSK. Residues 268–272 carry the 'KMSKS' region motif; it reads VMSKR. The tract at residues 317–324 is interaction with tRNA; the sequence is TKQDNTIE.

Belongs to the class-I aminoacyl-tRNA synthetase family. Monomer.

It is found in the cytoplasm. The catalysed reaction is tRNA(Gln) + L-glutamine + ATP = L-glutaminyl-tRNA(Gln) + AMP + diphosphate. This is Glutamine--tRNA ligase from Enterobacter sp. (strain 638).